An 85-amino-acid polypeptide reads, in one-letter code: Putative membrane protein insertion efficiency factor (85 aa).

The protein belongs to the UPF0161 family.

The protein localises to the cell inner membrane. In terms of biological role, could be involved in insertion of integral membrane proteins into the membrane. The protein is Putative membrane protein insertion efficiency factor of Fervidobacterium nodosum (strain ATCC 35602 / DSM 5306 / Rt17-B1).